We begin with the raw amino-acid sequence, 428 residues long: Monocarboxylate transporter 13 (428 aa).

Topologically, residues 1 to 10 (MVHRTEPPDG) are cytoplasmic. 12 consecutive transmembrane segments (helical) span residues 11-31 (GWGW…FGVL), 52-72 (VSWI…IGSA), 81-101 (PVVM…SFAT), 106-126 (LYLS…TPTL), 139-159 (LAMG…APLF), 172-192 (LLLV…LRPL), 221-241 (VALT…VAHL), 244-264 (LGWD…SDLV), 283-303 (LLML…VAQA), 309-329 (VLAV…FSVI), 338-358 (IYCG…LGAP), and 374-394 (FVVA…LPHF). The Cytoplasmic portion of the chain corresponds to 395-428 (FSCISLSTSRPQDLVIEAPDTKIPLPKEEGLGEN).

This sequence belongs to the major facilitator superfamily. Monocarboxylate porter (TC 2.A.1.13) family.

The protein localises to the golgi apparatus membrane. Its subcellular location is the cell membrane. Functionally, proton-linked monocarboxylate transporter. May catalyze the transport of monocarboxylates across the plasma membrane. In Rattus norvegicus (Rat), this protein is Monocarboxylate transporter 13 (Slc16a13).